The sequence spans 263 residues: Hydroxyethylthiazole kinase 2 (263 aa).

Met-42 lines the substrate pocket. The ATP site is built by Lys-118 and Thr-164. Gly-191 is a substrate binding site.

Belongs to the Thz kinase family. The cofactor is Mg(2+).

It carries out the reaction 5-(2-hydroxyethyl)-4-methylthiazole + ATP = 4-methyl-5-(2-phosphooxyethyl)-thiazole + ADP + H(+). Its pathway is cofactor biosynthesis; thiamine diphosphate biosynthesis; 4-methyl-5-(2-phosphoethyl)-thiazole from 5-(2-hydroxyethyl)-4-methylthiazole: step 1/1. Its function is as follows. Catalyzes the phosphorylation of the hydroxyl group of 4-methyl-5-beta-hydroxyethylthiazole (THZ). This is Hydroxyethylthiazole kinase 2 from Clostridium botulinum (strain Loch Maree / Type A3).